The sequence spans 332 residues: 3-ketodihydrosphingosine reductase (332 aa).

Residues 1–25 (MLLLAAASLVAFVLLLYMVSPLISP) form the signal peptide. Topologically, residues 26-269 (KPLALPGAHV…QGNFNSSIGS (244 aa)) are cytoplasmic. Residues Gly39, Ser41, Ser42, Gly43, Arg64, Lys68, and Asp93 each coordinate NADPH. Residues 39–43 (GGSSG) carry the GXSXG motif. The Proton donor role is filled by Ser172. Catalysis depends on Tyr186, which acts as the Proton acceptor. NADP(+) is bound by residues Tyr186 and Lys190. Lys190 (lowers pKa of active site Tyr) is an active-site residue. A helical transmembrane segment spans residues 270–290 (DGYMLSSLTCGMAPVTSIMEG). The Lumenal segment spans residues 291–292 (LQ). Residues 293–313 (QVVTMGLFRTIALFYLGSFDS) traverse the membrane as a helical segment. Residues 314–331 (IVRRCMMQKAKLETVDKT) are Cytoplasmic-facing.

The protein belongs to the short-chain dehydrogenases/reductases (SDR) family.

It is found in the endoplasmic reticulum membrane. It catalyses the reaction sphinganine + NADP(+) = 3-oxosphinganine + NADPH + H(+). The protein operates within lipid metabolism; sphingolipid metabolism. In terms of biological role, catalyzes the reduction of 3'-oxosphinganine (3-ketodihydrosphingosine/KDS) to sphinganine (dihydrosphingosine/DHS), the second step of de novo sphingolipid biosynthesis. The polypeptide is 3-ketodihydrosphingosine reductase (KDSR) (Bos taurus (Bovine)).